A 342-amino-acid polypeptide reads, in one-letter code: Nicotinate-nucleotide--dimethylbenzimidazole phosphoribosyltransferase (342 aa).

The active-site Proton acceptor is the Glu-311.

This sequence belongs to the CobT family.

It catalyses the reaction 5,6-dimethylbenzimidazole + nicotinate beta-D-ribonucleotide = alpha-ribazole 5'-phosphate + nicotinate + H(+). It functions in the pathway nucleoside biosynthesis; alpha-ribazole biosynthesis; alpha-ribazole from 5,6-dimethylbenzimidazole: step 1/2. In terms of biological role, catalyzes the synthesis of alpha-ribazole-5'-phosphate from nicotinate mononucleotide (NAMN) and 5,6-dimethylbenzimidazole (DMB). This Vibrio vulnificus (strain CMCP6) protein is Nicotinate-nucleotide--dimethylbenzimidazole phosphoribosyltransferase.